Here is a 437-residue protein sequence, read N- to C-terminus: CMP-5'-(3-aminopropyl)phosphonate hydroxylase (437 aa).

Requires FAD as cofactor.

The catalysed reaction is CMP-5'-(3-aminopropyl)phosphonate + NADPH + O2 = CMP-5'-(N-hydroxy-3-aminopropyl)phosphonate + NADP(+) + H2O. Its pathway is antibiotic biosynthesis. Functionally, hydroxylase involved in the biosynthesis of the phosphonate antibiotic FR-900098, a potent antimalarial agent that acts as an inhibitor of 1-deoxy-D-xylulose 5-phosphate reductoisomerase (DXR), the first enzyme in the nonmevalonate pathway for isoprenoid biosynthesis. Catalyzes the N-hydroxylation of CMP-5'-3-aminopropylphosphonate (CMP-5'-3APn) to CMP-5'-(N-hydroxy-3-aminopropyl)phosphonate (CMP-5'-H3APn). Cannot use CMP-5'-N-acetyl-3-aminopropylphosphonate (CMP-5'-Ac3APn) as a substrate. In Streptomyces rubellomurinus (strain ATCC 31215), this protein is CMP-5'-(3-aminopropyl)phosphonate hydroxylase.